We begin with the raw amino-acid sequence, 504 residues long: Probable alpha-L-arabinofuranosidase C (504 aa).

3 N-linked (GlcNAc...) asparagine glycosylation sites follow: Asn152, Asn181, and Asn269.

This sequence belongs to the glycosyl hydrolase 51 family.

The protein localises to the secreted. The catalysed reaction is Hydrolysis of terminal non-reducing alpha-L-arabinofuranoside residues in alpha-L-arabinosides.. Its pathway is glycan metabolism; L-arabinan degradation. Its function is as follows. Alpha-L-arabinofuranosidase involved in the degradation of arabinoxylan, a major component of plant hemicellulose. Acts only on small linear 1,5-alpha-linked L-arabinofuranosyl oligosaccharides. This Aspergillus flavus (strain ATCC 200026 / FGSC A1120 / IAM 13836 / NRRL 3357 / JCM 12722 / SRRC 167) protein is Probable alpha-L-arabinofuranosidase C (abfC).